We begin with the raw amino-acid sequence, 897 residues long: Interleukin enhancer-binding factor 3 (897 aa).

Positions 5–378 (RIFVNDDRHV…PMKRPMEEDG (374 aa)) constitute a DZF domain. The interval 52-85 (QEKGNSELSEAENMDTPPDDESKEGAGEQKAEHM) is disordered. The span at 60-73 (SEAENMDTPPDDES) shows a compositional bias: acidic residues. Thr67 is subject to Phosphothreonine. Residues 74–85 (KEGAGEQKAEHM) show a composition bias toward basic and acidic residues. At Lys100 the chain carries N6-acetyllysine. The residue at position 188 (Thr188) is a Phosphothreonine; by PKR. A Phosphoserine modification is found at Ser190. Residue Lys297 forms a Glycyl lysine isopeptide (Lys-Gly) (interchain with G-Cter in ubiquitin) linkage. Thr315 carries the post-translational modification Phosphothreonine; by PKR. Lys348 participates in a covalent cross-link: Glycyl lysine isopeptide (Lys-Gly) (interchain with G-Cter in SUMO1). Residues 363–401 (TTYAITPMKRPMEEDGEEKSPSKKKKKIQKKEEKAEPPQ) form a disordered region. The Bipartite nuclear localization signal signature appears at 371 to 389 (KRPMEEDGEEKSPSKKKKK). Residues 372–383 (RPMEEDGEEKSP) show a composition bias toward basic and acidic residues. Residues Ser382 and Ser384 each carry the phosphoserine modification. A Glycyl lysine isopeptide (Lys-Gly) (interchain with G-Cter in SUMO2) cross-link involves residue Lys396. One can recognise a DRBM 1 domain in the interval 398–467 (EPPQAMNALM…AVKVLQDMGL (70 aa)). Lys460 carries the N6-acetyllysine modification. 3 disordered regions span residues 466-524 (GLPT…LTKH), 624-662 (GMGG…GTNH), and 720-897 (GDSY…YQYR). Residues 472 to 481 (EGRDSSKGED) show a composition bias toward basic and acidic residues. Phosphoserine is present on residues Ser476, Ser477, Ser482, and Ser486. A Glycyl lysine isopeptide (Lys-Gly) (interchain with G-Cter in SUMO2) cross-link involves residue Lys489. A compositionally biased stretch (low complexity) spans 499-508 (VEAVSNPSSV). The DRBM 2 domain occupies 524–590 (HGKNPVMELN…ALAALEKLFP (67 aa)). Residues 609-897 (RGGPKFAAKP…TEHSMNYQYR (289 aa)) form an interaction with PRMT1 region. The span at 644–662 (RGGNIRGRGRGRGFGGTNH) shows a compositional bias: gly residues. 3 stretches are compositionally biased toward low complexity: residues 745 to 769 (SYSS…SSYG), 783 to 794 (GSYSSYSNSYNS), and 802 to 812 (DYSYDSKFNYS). Residues Ser794, Ser812, Ser814, and Ser818 each carry the phosphoserine modification. Positions 813–822 (GSGGRSGGNS) are enriched in gly residues. Residues 823-833 (YGSSGSSYNTG) are compositionally biased toward low complexity. Residues 834–844 (SHGGYGAGSGG) show a composition bias toward gly residues. Positions 845–885 (SSSYQGKQGGYSSQSNYSSPGSSQSYSGPASSYQSSQGGYS) are enriched in low complexity.

Identified in a IGF2BP1-dependent mRNP granule complex containing untranslated mRNAs. Interacts with FUS and SMN. Interacts (via C-terminus) with PRMT1. Forms a complex with ILF2. Can also bind to PRKDC/XRCC7: this may stabilize the interaction of PRKDC/XRCC7 and the heterodimeric complex of XRCC6/KU70 and XRCC5/KU80. Forms a heteromeric complex with ZNF346 and ILF3. Found in a nuclear export complex with XPO5, ILF3, Ran and double-stranded RNA or double-stranded minihelix VA1 RNA. Found in a nuclear export complex with XPO5, RAN, ILF3, ZNF346 and double-stranded RNA. Interacts with XPO5 and ZNF346. Forms a complex with ILF2, YLPM1, KHDRBS1, RBMX, NCOA5 and PPP1CA. Interacts with AGO1 and AGO2. Interacts with DHX36; this interaction occurs in a RNA-dependent manner. Interacts with ELAVL1; this interaction occurs in a RNA-dependent manner. Interacts with HAVCR2; this interaction promotes ILF3 ubiquitination and subsequent degradation. Phosphorylated at Thr-188 and Thr-315 by PKR in response to RNA viruses. This phosphorylation results in the dissociation of ILF2 from the ILF2-ILF3 complex resulting in a cytoplasmic sequestration of ILF3 where it can bind to viral RNAs and impede viral replication. In terms of processing, methylated by protein arginine N-methyltransferase 1.

It localises to the nucleus. It is found in the nucleolus. The protein localises to the cytoplasm. In terms of biological role, RNA-binding protein that plays an essential role in the biogenesis of circular RNAs (circRNAs) which are produced by back-splicing circularization of pre-mRNAs. Within the nucleus, promotes circRNAs processing by stabilizing the regulatory elements residing in the flanking introns of the circularized exons. Plays thereby a role in the back-splicing of a subset of circRNAs. As a consequence, participates in a wide range of transcriptional and post-transcriptional processes. Binds to poly-U elements and AU-rich elements (AREs) in the 3'-UTR of target mRNAs. Upon viral infection, ILF3 accumulates in the cytoplasm and participates in the innate antiviral response. Mechanistically, ILF3 becomes phosphorylated and activated by the double-stranded RNA-activated protein kinase/PKR which releases ILF3 from cellular mature circRNAs. In turn, unbound ILF3 molecules are able to interact with and thus inhibit viral mRNAs. In Rattus norvegicus (Rat), this protein is Interleukin enhancer-binding factor 3 (Ilf3).